The chain runs to 374 residues: Glutamate 5-kinase (374 aa).

An ATP-binding site is contributed by K8. Substrate contacts are provided by S49, D136, and N148. Residues 168–169 (TD) and 211–217 (TGGMQTK) contribute to the ATP site. One can recognise a PUA domain in the interval 276 to 354 (QGILTLDDGA…TQIRQILGYG (79 aa)).

Belongs to the glutamate 5-kinase family.

The protein localises to the cytoplasm. The catalysed reaction is L-glutamate + ATP = L-glutamyl 5-phosphate + ADP. Its pathway is amino-acid biosynthesis; L-proline biosynthesis; L-glutamate 5-semialdehyde from L-glutamate: step 1/2. Functionally, catalyzes the transfer of a phosphate group to glutamate to form L-glutamate 5-phosphate. In Picosynechococcus sp. (strain ATCC 27264 / PCC 7002 / PR-6) (Agmenellum quadruplicatum), this protein is Glutamate 5-kinase.